Consider the following 578-residue polypeptide: Isocitrate dehydrogenase kinase/phosphatase (578 aa).

ATP is bound by residues 315-321 (APGIRGM) and Lys336. Residue Asp371 is part of the active site.

The protein belongs to the AceK family.

The protein localises to the cytoplasm. The enzyme catalyses L-seryl-[isocitrate dehydrogenase] + ATP = O-phospho-L-seryl-[isocitrate dehydrogenase] + ADP + H(+). Bifunctional enzyme which can phosphorylate or dephosphorylate isocitrate dehydrogenase (IDH) on a specific serine residue. This is a regulatory mechanism which enables bacteria to bypass the Krebs cycle via the glyoxylate shunt in response to the source of carbon. When bacteria are grown on glucose, IDH is fully active and unphosphorylated, but when grown on acetate or ethanol, the activity of IDH declines drastically concomitant with its phosphorylation. The polypeptide is Isocitrate dehydrogenase kinase/phosphatase (Escherichia coli (strain ATCC 8739 / DSM 1576 / NBRC 3972 / NCIMB 8545 / WDCM 00012 / Crooks)).